Here is a 202-residue protein sequence, read N- to C-terminus: N-(5'-phosphoribosyl)anthranilate isomerase (202 aa).

It belongs to the TrpF family.

It catalyses the reaction N-(5-phospho-beta-D-ribosyl)anthranilate = 1-(2-carboxyphenylamino)-1-deoxy-D-ribulose 5-phosphate. It functions in the pathway amino-acid biosynthesis; L-tryptophan biosynthesis; L-tryptophan from chorismate: step 3/5. In Listeria welshimeri serovar 6b (strain ATCC 35897 / DSM 20650 / CCUG 15529 / CIP 8149 / NCTC 11857 / SLCC 5334 / V8), this protein is N-(5'-phosphoribosyl)anthranilate isomerase.